Reading from the N-terminus, the 144-residue chain is MQNRLIEIFNETDFDQFDIELMESITSQLTDRPVELMIVDDERMRTLNKTYRDIDKTTDVLSFPMQEIPNAPLGSIVINADKVLHTAKELGHSAKDEFALLYIHGLLHLLGYDHESDNGEMRAMEEKLIIEYNLPKSLIIRTYE.

The Zn(2+) site is built by His-104, His-108, and His-114.

It belongs to the endoribonuclease YbeY family. Zn(2+) is required as a cofactor.

It localises to the cytoplasm. Its function is as follows. Single strand-specific metallo-endoribonuclease involved in late-stage 70S ribosome quality control and in maturation of the 3' terminus of the 16S rRNA. The chain is Endoribonuclease YbeY from Nitratiruptor sp. (strain SB155-2).